Consider the following 100-residue polypeptide: uncharacterized protein (100 aa).

2 consecutive transmembrane segments (helical) span residues 17 to 37 and 78 to 98; these read IIILTLLFILIMLIFRNSVSF and MVDKTRLFIFLFFSFIITIPF.

Its subcellular location is the endoplasmic reticulum membrane. This is an uncharacterized protein from Saccharomyces cerevisiae (strain ATCC 204508 / S288c) (Baker's yeast).